A 181-amino-acid polypeptide reads, in one-letter code: Adenylate kinase (181 aa).

ATP is bound at residue 10–15; the sequence is GAGKGT. The tract at residues 30–59 is NMP; the sequence is STGDLFRANIGEGTPLGLEAKSYIDAGKLV. Residues threonine 31, arginine 36, 57–59, 85–88, and glutamine 92 each bind AMP; these read KLV and GFPR. Positions 126–132 are LID; it reads ARGRADD. Position 127 (arginine 127) interacts with ATP. AMP-binding residues include arginine 129 and arginine 140. Glycine 166 serves as a coordination point for ATP.

It belongs to the adenylate kinase family. In terms of assembly, monomer.

Its subcellular location is the cytoplasm. It catalyses the reaction AMP + ATP = 2 ADP. It participates in purine metabolism; AMP biosynthesis via salvage pathway; AMP from ADP: step 1/1. Catalyzes the reversible transfer of the terminal phosphate group between ATP and AMP. Plays an important role in cellular energy homeostasis and in adenine nucleotide metabolism. In Corynebacterium aurimucosum (strain ATCC 700975 / DSM 44827 / CIP 107346 / CN-1) (Corynebacterium nigricans), this protein is Adenylate kinase.